The sequence spans 586 residues: MFPVKGLSVSADKLKVEPGAIVGTAPAAPAPASAPAVSSSKPSKKRKRHGGDKDVNVDASNLVDLWEKVIEQKKEGVADGVKKHENKRLKKEHEGQGEKLSNSNNDGNQGERKNNKKKNKNKNKNQGEHGIQVAQKKGPKKVEGEEDEDDNNDDADEWEGIDEDEKHASSEKPTPKKDDKKQQQLQQQQQQKKQQKNQEKDNRNGTTSNWQQDKPQPKTATPAPKLTPLQASMREKLISARFRHLNETLYTRPSTEAFKLFEESPEMFTEYHEGFRRQVDVWPENPVDVYIKEIKERAKVRFAPKISGGAEGGKSLPPARFPLPRDQKTKVCTIADLGCGDAKLAKTLVPLKQKLRLEIHSFDLQTGGCELVTRADIANLPLPDNSVDLAIFCLALMGTNWLDFVEEAYRILRWRGELWVAEIKSRFAGSQARVKQPPQKKVVAHSVGKRKKGSALAVAEEEEGDPEQNNLDLAVHVDGDTSKLKKPHETDITAFVEALKRRGFLLNRDFGDNSVDMGNKMFVRMHFVKAAVPTRGKCVPKDGQEDTTKNKKGGQKPKPKFIEEKDEQEEVKDEAAVLKPCVYKIR.

Disordered stretches follow at residues 23-229 and 536-573; these read GTAP…LTPL and GKCV…EVKD. The span at 25–41 shows a compositional bias: low complexity; it reads APAAPAPASAPAVSSSK. The segment covering 65–83 has biased composition (basic and acidic residues); sequence LWEKVIEQKKEGVADGVKK. Residues 99-108 show a composition bias toward polar residues; that stretch reads KLSNSNNDGN. Positions 114–123 are enriched in basic residues; that stretch reads NNKKKNKNKN. Positions 144-163 are enriched in acidic residues; that stretch reads GEEDEDDNNDDADEWEGIDE. Residues 164–182 show a composition bias toward basic and acidic residues; it reads DEKHASSEKPTPKKDDKKQ. Over residues 183–192 the composition is skewed to low complexity; that stretch reads QQLQQQQQQK. Positions 204 to 213 are enriched in polar residues; the sequence is NGTTSNWQQD. The segment covering 217-229 has biased composition (low complexity); it reads PKTATPAPKLTPL. The segment covering 539 to 549 has biased composition (basic and acidic residues); it reads VPKDGQEDTTK. The span at 550–559 shows a compositional bias: basic residues; the sequence is NKKGGQKPKP.

Belongs to the methyltransferase superfamily. RRP8 family.

Its subcellular location is the nucleus. It localises to the nucleolus. Functionally, S-adenosyl-L-methionine-dependent methyltransferase that specifically methylates the N(1) position of a conserved adenine in helix 25.1 in 25S rRNA. Required both for ribosomal 40S and 60S subunits biogenesis. Required for efficient pre-rRNA cleavage at site A2. The chain is 25S rRNA (adenine-N(1))-methyltransferase (RPR8) from Chaetomium thermophilum (strain DSM 1495 / CBS 144.50 / IMI 039719) (Thermochaetoides thermophila).